Here is a 121-residue protein sequence, read N- to C-terminus: Small ribosomal subunit protein uS13 (121 aa).

The disordered stretch occupies residues 94-121 (SLPVRGQNTKNNSRTRKGPRRTVANKKK). Positions 106–121 (SRTRKGPRRTVANKKK) are enriched in basic residues.

This sequence belongs to the universal ribosomal protein uS13 family. As to quaternary structure, part of the 30S ribosomal subunit. Forms a loose heterodimer with protein S19. Forms two bridges to the 50S subunit in the 70S ribosome.

In terms of biological role, located at the top of the head of the 30S subunit, it contacts several helices of the 16S rRNA. In the 70S ribosome it contacts the 23S rRNA (bridge B1a) and protein L5 of the 50S subunit (bridge B1b), connecting the 2 subunits; these bridges are implicated in subunit movement. Contacts the tRNAs in the A and P-sites. This chain is Small ribosomal subunit protein uS13, found in Exiguobacterium sp. (strain ATCC BAA-1283 / AT1b).